Here is a 275-residue protein sequence, read N- to C-terminus: Putative carbamate hydrolase RutD (275 aa).

It belongs to the AB hydrolase superfamily. Hydrolase RutD family.

The enzyme catalyses carbamate + 2 H(+) = NH4(+) + CO2. Its function is as follows. Involved in pyrimidine catabolism. May facilitate the hydrolysis of carbamate, a reaction that can also occur spontaneously. The sequence is that of Putative carbamate hydrolase RutD from Escherichia coli (strain UTI89 / UPEC).